Here is a 210-residue protein sequence, read N- to C-terminus: Nucleoside triphosphate pyrophosphatase (210 aa).

The Proton acceptor role is filled by aspartate 79.

This sequence belongs to the Maf family. A divalent metal cation is required as a cofactor.

The protein localises to the cytoplasm. It catalyses the reaction a ribonucleoside 5'-triphosphate + H2O = a ribonucleoside 5'-phosphate + diphosphate + H(+). The catalysed reaction is a 2'-deoxyribonucleoside 5'-triphosphate + H2O = a 2'-deoxyribonucleoside 5'-phosphate + diphosphate + H(+). Its function is as follows. Nucleoside triphosphate pyrophosphatase. May have a dual role in cell division arrest and in preventing the incorporation of modified nucleotides into cellular nucleic acids. The sequence is that of Nucleoside triphosphate pyrophosphatase from Mycolicibacterium paratuberculosis (strain ATCC BAA-968 / K-10) (Mycobacterium paratuberculosis).